Consider the following 489-residue polypeptide: Ribulose bisphosphate carboxylase large chain 2 (489 aa).

Residues N128 and T178 each contribute to the substrate site. The Proton acceptor role is filled by K180. Residue K182 coordinates substrate. 3 residues coordinate Mg(2+): K206, D208, and E209. K206 is subject to N6-carboxylysine. Catalysis depends on H298, which acts as the Proton acceptor. Residues R299, H331, and S383 each contribute to the substrate site.

It belongs to the RuBisCO large chain family. Type I subfamily. As to quaternary structure, heterohexadecamer of 8 large chains and 8 small chains. It depends on Mg(2+) as a cofactor.

It carries out the reaction 2 (2R)-3-phosphoglycerate + 2 H(+) = D-ribulose 1,5-bisphosphate + CO2 + H2O. The enzyme catalyses D-ribulose 1,5-bisphosphate + O2 = 2-phosphoglycolate + (2R)-3-phosphoglycerate + 2 H(+). Its function is as follows. RuBisCO catalyzes two reactions: the carboxylation of D-ribulose 1,5-bisphosphate, the primary event in carbon dioxide fixation, as well as the oxidative fragmentation of the pentose substrate. Both reactions occur simultaneously and in competition at the same active site. The protein is Ribulose bisphosphate carboxylase large chain 2 of Nitrobacter winogradskyi (strain ATCC 25391 / DSM 10237 / CIP 104748 / NCIMB 11846 / Nb-255).